A 292-amino-acid polypeptide reads, in one-letter code: Elongation factor Ts (292 aa).

The tract at residues 80 to 83 (TDFV) is involved in Mg(2+) ion dislocation from EF-Tu.

This sequence belongs to the EF-Ts family.

It is found in the cytoplasm. Its function is as follows. Associates with the EF-Tu.GDP complex and induces the exchange of GDP to GTP. It remains bound to the aminoacyl-tRNA.EF-Tu.GTP complex up to the GTP hydrolysis stage on the ribosome. The sequence is that of Elongation factor Ts from Ralstonia pickettii (strain 12J).